The following is a 465-amino-acid chain: Ribulose bisphosphate carboxylase large chain (465 aa).

Lysine 4 carries the N6,N6,N6-trimethyllysine modification. Substrate contacts are provided by asparagine 113 and threonine 163. Lysine 165 serves as the catalytic Proton acceptor. Lysine 167 is a binding site for substrate. Mg(2+)-binding residues include lysine 191, aspartate 193, and glutamate 194. The residue at position 191 (lysine 191) is an N6-carboxylysine. The Proton acceptor role is filled by histidine 284. 3 residues coordinate substrate: arginine 285, histidine 317, and serine 369.

It belongs to the RuBisCO large chain family. Type I subfamily. In terms of assembly, heterohexadecamer of 8 large chains and 8 small chains; disulfide-linked. The disulfide link is formed within the large subunit homodimers. It depends on Mg(2+) as a cofactor. In terms of processing, the disulfide bond which can form in the large chain dimeric partners within the hexadecamer appears to be associated with oxidative stress and protein turnover.

The protein localises to the plastid. It localises to the chloroplast. It carries out the reaction 2 (2R)-3-phosphoglycerate + 2 H(+) = D-ribulose 1,5-bisphosphate + CO2 + H2O. It catalyses the reaction D-ribulose 1,5-bisphosphate + O2 = 2-phosphoglycolate + (2R)-3-phosphoglycerate + 2 H(+). RuBisCO catalyzes two reactions: the carboxylation of D-ribulose 1,5-bisphosphate, the primary event in carbon dioxide fixation, as well as the oxidative fragmentation of the pentose substrate in the photorespiration process. Both reactions occur simultaneously and in competition at the same active site. The protein is Ribulose bisphosphate carboxylase large chain of Acer saccharum (Sugar maple).